A 1452-amino-acid chain; its full sequence is ABC-type transporter adrC (1452 aa).

The tract at residues 1-38 (MAPEEGDQAMSHEDKAACSSLNTTSSTELFDGAPSSEN) is disordered. The segment covering 19–28 (SSLNTTSSTE) has biased composition (polar residues). An ABC transporter 1 domain is found at 116 to 378 (KRLMSIVGNK…FETMGWKRPP (263 aa)). 6 helical membrane-spanning segments follow: residues 487-507 (IPALIATAVAQTVVSLIIGSL), 524-544 (VLFLAVLTNALISLLEITTLY), 569-589 (VIVDFPIKLFRCLLSAIIVYF), 598-618 (SHFFIYIMFQLTAVMTMATIF), 631-651 (AMALAGVVIICIAVYTGFTVP), and 738-758 (GILVAFLVFFYVLYFWLTELI). One can recognise an ABC transporter 2 domain in the interval 813-1055 (FSWKGLSYDI…TVLEYLEDKG (243 aa)). 849 to 856 (GVSGAGKT) contacts ATP. A run of 7 helical transmembrane segments spans residues 1149 to 1169 (YILAKFGAGVFCGVFIGFSFW), 1181 to 1201 (VLFSLFLLCTIFSTLVNQIMP), 1224 to 1244 (VFILCQILVELPWQTLLGICT), 1264 to 1284 (LVLLFTVQFFIFASTFAQLVV), 1287 to 1307 (VPSVVLGSMLATFTFLLCLLF), 1322 to 1344 (IFMNRVSPLTYYVGGISATALHG), and 1415 to 1435 (FGIFWVYIIFNVIGAVLLYYL).

It belongs to the ABC transporter superfamily. ABCG family. PDR (TC 3.A.1.205) subfamily.

The protein resides in the membrane. Functionally, ABC-type transporter; part of the gene cluster that mediates the biosynthesis of the meroterpenoid compound andrastin A, a promising antitumoral compound. Is required for the production of andrastin A but does not have a significant role in its secretion. This is ABC-type transporter adrC from Penicillium roqueforti.